The following is a 335-amino-acid chain: Ketol-acid reductoisomerase (NADP(+)) 2 (335 aa).

Residues 1-180 form the KARI N-terminal Rossmann domain; that stretch reads MKTYYEKDAN…GCTRAGVIET (180 aa). NADP(+)-binding positions include 24–27, Arg47, Ser51, and 81–84; these read YGSQ and DEQQ. The active site involves His106. Gly132 contributes to the NADP(+) binding site. Residues 181–326 form the KARI C-terminal knotted domain; the sequence is TFQEETETDL…AELREMMSWI (146 aa). Residues Asp189, Glu193, Glu225, and Glu229 each contribute to the Mg(2+) site. A substrate-binding site is contributed by Ser250.

The protein belongs to the ketol-acid reductoisomerase family. Requires Mg(2+) as cofactor.

The catalysed reaction is (2R)-2,3-dihydroxy-3-methylbutanoate + NADP(+) = (2S)-2-acetolactate + NADPH + H(+). It catalyses the reaction (2R,3R)-2,3-dihydroxy-3-methylpentanoate + NADP(+) = (S)-2-ethyl-2-hydroxy-3-oxobutanoate + NADPH + H(+). The protein operates within amino-acid biosynthesis; L-isoleucine biosynthesis; L-isoleucine from 2-oxobutanoate: step 2/4. It functions in the pathway amino-acid biosynthesis; L-valine biosynthesis; L-valine from pyruvate: step 2/4. In terms of biological role, involved in the biosynthesis of branched-chain amino acids (BCAA). Catalyzes an alkyl-migration followed by a ketol-acid reduction of (S)-2-acetolactate (S2AL) to yield (R)-2,3-dihydroxy-isovalerate. In the isomerase reaction, S2AL is rearranged via a Mg-dependent methyl migration to produce 3-hydroxy-3-methyl-2-ketobutyrate (HMKB). In the reductase reaction, this 2-ketoacid undergoes a metal-dependent reduction by NADPH to yield (R)-2,3-dihydroxy-isovalerate. This is Ketol-acid reductoisomerase (NADP(+)) 2 from Bacillus cereus (strain ZK / E33L).